The primary structure comprises 68 residues: MDQIMQFVEPSRQFVKDSIRLVKRCTKPDRKEFQKIAMATAIGFAIMGFIGFFVKLIHIPINNIIVGG.

Residues 1 to 32 (MDQIMQFVEPSRQFVKDSIRLVKRCTKPDRKE) are Cytoplasmic-facing. A helical membrane pass occupies residues 33–61 (FQKIAMATAIGFAIMGFIGFFVKLIHIPI). Residues 62-68 (NNIIVGG) are Extracellular-facing.

This sequence belongs to the SecE/SEC61-gamma family. The SEC61 channel-forming translocon complex consists of channel-forming core components SEC61A1, SEC61B and SEC61G and different auxiliary components such as SEC62 and SEC63. The SEC61 channel associates with the multi-pass translocon (MPT) complex.

It is found in the endoplasmic reticulum membrane. Its function is as follows. Component of SEC61 channel-forming translocon complex that mediates transport of signal peptide-containing precursor polypeptides across the endoplasmic reticulum (ER). Forms a ribosome receptor and a gated pore in the ER membrane, both functions required for cotranslational translocation of nascent polypeptides. The SEC61 channel is also involved in ER membrane insertion of transmembrane proteins: it mediates membrane insertion of the first few transmembrane segments of proteins, while insertion of subsequent transmembrane regions of multi-pass membrane proteins is mediated by the multi-pass translocon (MPT) complex. This chain is Protein transport protein Sec61 subunit gamma (sec61g), found in Gadus morhua (Atlantic cod).